Reading from the N-terminus, the 192-residue chain is Ion-translocating oxidoreductase complex subunit B (192 aa).

Residues 1-26 form a hydrophobic region; that stretch reads MNTIWIAVGALTLLGLVFGAILGYAS. The 4Fe-4S domain occupies 32 to 91; sequence EDDPVVEKIDAILPQSQCGQCGYPGCRPYAEAVGLQGEKINRCAPGGEAVMLKIAELLNV. [4Fe-4S] cluster contacts are provided by cysteine 49, cysteine 52, cysteine 57, cysteine 74, cysteine 117, cysteine 120, cysteine 123, cysteine 127, cysteine 147, cysteine 150, cysteine 153, and cysteine 157. 4Fe-4S ferredoxin-type domains are found at residues 108-137 and 138-167; these read MLAVIDENNCIGCTKCIQACPVDAIVGATR and AMHTVMSDLCTGCNLCVDPCPTHCIELRPV.

This sequence belongs to the 4Fe4S bacterial-type ferredoxin family. RnfB subfamily. As to quaternary structure, the complex is composed of six subunits: RsxA, RsxB, RsxC, RsxD, RsxE and RsxG. It depends on [4Fe-4S] cluster as a cofactor.

It is found in the cell inner membrane. Its function is as follows. Part of a membrane-bound complex that couples electron transfer with translocation of ions across the membrane. Required to maintain the reduced state of SoxR. The protein is Ion-translocating oxidoreductase complex subunit B of Salmonella dublin (strain CT_02021853).